The chain runs to 30 residues: Ornithine carbamoyltransferase, catabolic (30 aa).

It belongs to the aspartate/ornithine carbamoyltransferase superfamily. OTCase family.

It is found in the cytoplasm. It catalyses the reaction carbamoyl phosphate + L-ornithine = L-citrulline + phosphate + H(+). The protein operates within amino-acid degradation; L-arginine degradation via ADI pathway; carbamoyl phosphate from L-arginine: step 2/2. This Aeromonas caviae (Aeromonas punctata) protein is Ornithine carbamoyltransferase, catabolic (arcB).